The sequence spans 259 residues: MKPTITSWADEVEADYVDGLPPSKEHVDGDYKHVTEYKFNDEGKKIKVVRSFKIEKKIVSRAVAKRRNWTKFGDSKLDKPGPNSYTTKVADEILMNYMGSKDFEHTQDPLDASKPIAKCRICNGEHWSVKCPYKGTSMDIESKAIAAATAAVGETNKAGKYVPPFLKEGGKGRERDDSSAVRISNLSESMTEDDLEELVKKIGPHTKMYLAREKNSGLCKGFAYVHFKYRKDAAEAIEILNGHGYDHLILSVEWSKPQN.

One can recognise an RRM domain in the interval 179–257 (SAVRISNLSE…LILSVEWSKP (79 aa)).

Belongs to the eIF-3 subunit G family. Component of the eukaryotic translation initiation factor 3 (eIF-3) complex. The eIF-3 complex interacts with pix.

Its subcellular location is the cytoplasm. Functionally, RNA-binding component of the eukaryotic translation initiation factor 3 (eIF-3) complex, which is involved in protein synthesis of a specialized repertoire of mRNAs and, together with other initiation factors, stimulates binding of mRNA and methionyl-tRNAi to the 40S ribosome. The eIF-3 complex specifically targets and initiates translation of a subset of mRNAs involved in cell proliferation. This subunit can bind 18S rRNA. The sequence is that of Eukaryotic translation initiation factor 3 subunit G-2 from Drosophila mojavensis (Fruit fly).